A 137-amino-acid polypeptide reads, in one-letter code: Cofilin-1A (137 aa).

The region spanning 2–135 is the ADF-H domain; it reads SSGIALAPNC…KDSCFYEKCT (134 aa).

Belongs to the actin-binding proteins ADF family.

The protein localises to the nucleus matrix. Its subcellular location is the cytoplasm. It localises to the cytoskeleton. In terms of biological role, controls reversibly actin polymerization and depolymerization in a pH-sensitive manner. It has the ability to bind G- and F-actin in a 1:1 ratio of cofilin to actin. It is the major component of intranuclear and cytoplasmic actin rods. The polypeptide is Cofilin-1A (cofA) (Dictyostelium discoideum (Social amoeba)).